Reading from the N-terminus, the 151-residue chain is Guanylate kinase homolog (151 aa).

The region spanning 1-141 (MEREGVDYHY…AYSKLIQILQ (141 aa)) is the Guanylate kinase-like domain.

It belongs to the guanylate kinase family.

The polypeptide is Guanylate kinase homolog (Vaccinia virus (strain Copenhagen) (VACV)).